A 514-amino-acid chain; its full sequence is 2-isopropylmalate synthase (514 aa).

Positions 8–270 (IRIFDTTLRD…DCGVVTEQLF (263 aa)) constitute a Pyruvate carboxyltransferase domain. Residues Asp-17, His-205, His-207, and Asn-241 each contribute to the Mn(2+) site. A regulatory domain region spans residues 394–514 (RLVNLSVQCS…KEEEQEKEGI (121 aa)).

It belongs to the alpha-IPM synthase/homocitrate synthase family. LeuA type 1 subfamily. Homodimer. Mn(2+) is required as a cofactor.

Its subcellular location is the cytoplasm. It catalyses the reaction 3-methyl-2-oxobutanoate + acetyl-CoA + H2O = (2S)-2-isopropylmalate + CoA + H(+). It functions in the pathway amino-acid biosynthesis; L-leucine biosynthesis; L-leucine from 3-methyl-2-oxobutanoate: step 1/4. In terms of biological role, catalyzes the condensation of the acetyl group of acetyl-CoA with 3-methyl-2-oxobutanoate (2-ketoisovalerate) to form 3-carboxy-3-hydroxy-4-methylpentanoate (2-isopropylmalate). The protein is 2-isopropylmalate synthase of Nitratidesulfovibrio vulgaris (strain DSM 19637 / Miyazaki F) (Desulfovibrio vulgaris).